The following is a 91-amino-acid chain: uncharacterized protein (91 aa).

3 helical membrane-spanning segments follow: residues 4-21, 28-50, and 60-82; these read YAIISFLLGIAFGFLRRG, IIEVIFVSLLLGLVSGIALSHAV, and VKAFGLIVAALIYAIFFAAGTYL.

It is found in the cell membrane. This is an uncharacterized protein from Archaeoglobus fulgidus (strain ATCC 49558 / DSM 4304 / JCM 9628 / NBRC 100126 / VC-16).